The sequence spans 193 residues: Potassium-transporting ATPase KdpC subunit (193 aa).

The helical transmembrane segment at 14 to 34 threads the bilayer; that stretch reads ITFTFLVLCGLVYPLIVTGIA.

Belongs to the KdpC family. The system is composed of three essential subunits: KdpA, KdpB and KdpC.

The protein resides in the cell membrane. Functionally, part of the high-affinity ATP-driven potassium transport (or Kdp) system, which catalyzes the hydrolysis of ATP coupled with the electrogenic transport of potassium into the cytoplasm. This subunit acts as a catalytic chaperone that increases the ATP-binding affinity of the ATP-hydrolyzing subunit KdpB by the formation of a transient KdpB/KdpC/ATP ternary complex. The protein is Potassium-transporting ATPase KdpC subunit of Bacillus anthracis (strain A0248).